We begin with the raw amino-acid sequence, 98 residues long: NADH-ubiquinone oxidoreductase chain 4L (98 aa).

Helical transmembrane passes span 1-21 (MSMM…GLLM), 29-49 (SLLC…VTIL), and 61-81 (IILL…LVMV).

Belongs to the complex I subunit 4L family. In terms of assembly, core subunit of respiratory chain NADH dehydrogenase (Complex I) which is composed of 45 different subunits.

It localises to the mitochondrion inner membrane. It carries out the reaction a ubiquinone + NADH + 5 H(+)(in) = a ubiquinol + NAD(+) + 4 H(+)(out). Its function is as follows. Core subunit of the mitochondrial membrane respiratory chain NADH dehydrogenase (Complex I) which catalyzes electron transfer from NADH through the respiratory chain, using ubiquinone as an electron acceptor. Part of the enzyme membrane arm which is embedded in the lipid bilayer and involved in proton translocation. In Zalophus californianus (California sealion), this protein is NADH-ubiquinone oxidoreductase chain 4L (MT-ND4L).